A 143-amino-acid polypeptide reads, in one-letter code: Large ribosomal subunit protein uL11 (143 aa).

The protein belongs to the universal ribosomal protein uL11 family. In terms of assembly, part of the ribosomal stalk of the 50S ribosomal subunit. Interacts with L10 and the large rRNA to form the base of the stalk. L10 forms an elongated spine to which L12 dimers bind in a sequential fashion forming a multimeric L10(L12)X complex. Post-translationally, one or more lysine residues are methylated.

In terms of biological role, forms part of the ribosomal stalk which helps the ribosome interact with GTP-bound translation factors. The protein is Large ribosomal subunit protein uL11 of Bifidobacterium adolescentis (strain ATCC 15703 / DSM 20083 / NCTC 11814 / E194a).